The chain runs to 381 residues: Chaperone protein DnaJ (381 aa).

Residues 5–70 (DYYEVLGCDR…QKRGAYDRYG (66 aa)) enclose the J domain. Residues 136 to 214 (GKTAQISIPT…CGGAGRVTRE (79 aa)) form a CR-type zinc finger. Zn(2+) contacts are provided by Cys149, Cys152, Cys166, Cys169, Cys188, Cys191, Cys202, and Cys205. 4 CXXCXGXG motif repeats span residues 149–156 (CEVCSGSG), 166–173 (CRTCNGAG), 188–195 (CPSCQGRG), and 202–209 (CPNCGGAG).

It belongs to the DnaJ family. In terms of assembly, homodimer. Zn(2+) is required as a cofactor.

The protein localises to the cytoplasm. Functionally, participates actively in the response to hyperosmotic and heat shock by preventing the aggregation of stress-denatured proteins and by disaggregating proteins, also in an autonomous, DnaK-independent fashion. Unfolded proteins bind initially to DnaJ; upon interaction with the DnaJ-bound protein, DnaK hydrolyzes its bound ATP, resulting in the formation of a stable complex. GrpE releases ADP from DnaK; ATP binding to DnaK triggers the release of the substrate protein, thus completing the reaction cycle. Several rounds of ATP-dependent interactions between DnaJ, DnaK and GrpE are required for fully efficient folding. Also involved, together with DnaK and GrpE, in the DNA replication of plasmids through activation of initiation proteins. This Azorhizobium caulinodans (strain ATCC 43989 / DSM 5975 / JCM 20966 / LMG 6465 / NBRC 14845 / NCIMB 13405 / ORS 571) protein is Chaperone protein DnaJ.